A 150-amino-acid chain; its full sequence is Putative pre-16S rRNA nuclease (150 aa).

This sequence belongs to the YqgF nuclease family.

Its subcellular location is the cytoplasm. Its function is as follows. Could be a nuclease involved in processing of the 5'-end of pre-16S rRNA. The chain is Putative pre-16S rRNA nuclease from Syntrophus aciditrophicus (strain SB).